The following is a 95-amino-acid chain: Trypomastigote decay-accelerating factor (95 aa).

This sequence belongs to the receptors of complement activation (RCA) family.

Functionally, interferes with the efficient assembly of the host C3 convertase. Could protect parasites from complement-mediated lysis by sera from a number of different species. The chain is Trypomastigote decay-accelerating factor from Trypanosoma cruzi.